Consider the following 346-residue polypeptide: Calcium homeostasis modulator protein 1 (346 aa).

The Cytoplasmic portion of the chain corresponds to 1–21 (MMDKFRMIFQFLQSNQESFMN). Positions 10-37 (QFLQSNQESFMNGICGIMALASAQMYSA) are central pore. Residues 22 to 37 (GICGIMALASAQMYSA) form a helical membrane-spanning segment. Topologically, residues 38 to 49 (FDFNCPCLPGYN) are extracellular. Intrachain disulfides connect cysteine 42/cysteine 127 and cysteine 44/cysteine 161. The helical transmembrane segment at 50–72 (AAYSAGILLAPPLVLFLLGLVMN) threads the bilayer. Residues 63–70 (VLFLLGLV) are phospholipid-binding. At 73-99 (NNVSMLAEEWKRPLGRRAKDPAVLRYM) the chain is on the cytoplasmic side. A helical transmembrane segment spans residues 100 to 125 (FCSMAQRALIAPVVWVAVTLLDGKCF). Cysteine 101 is lipidated: S-palmitoyl cysteine. The phospholipid-binding stretch occupies residues 105–117 (QRALIAPVVWVAV). Residues 126–180 (LCAFCTAVPVSALGNGSLAPGLPAPELARLLARVPCPEIYDGDWLLAREVAVRYL) are Extracellular-facing. A glycan (N-linked (GlcNAc...) asparagine) is linked at asparagine 140. Residues 181 to 206 (RCISQALGWSFVLLTTLLAFVVRSVR) traverse the membrane as a helical segment. The tract at residues 192–202 (VLLTTLLAFVV) is phospholipid-binding. The Cytoplasmic segment spans residues 207–346 (PCFTQAAFLK…KEVATYFSKV (140 aa)). Residue cysteine 208 is the site of S-palmitoyl cysteine attachment. The segment at 313-346 (LRLGQEEPPLMGNGWAGGGPRPPRKEVATYFSKV) is disordered.

Belongs to the CALHM family. Oligomerizes to form hexamers and octamers. Does not form gap junctions. Associates with CALHM3 as a pore-forming subunit in a hetero-hexameric channel complex. Post-translationally, N-glycosylated. Assembly with CALHM3 is associated with N-glycan remodeling and formation of hybrid complex- and high mannose-type glycochains. This N-glycan processing regulates channel trafficking and gating kinetics. In terms of processing, palmitoylated by ZDHHC3, ZDHHC20 and possibly ZDHHC7. Palmitoylation regulates voltage-dependent gating of the channel by shifting it toward more depolarized potentials. Predominantly expressed in adult brain. Detected also in retinoic acid-differentiated SH-SY5Y cells. Specifically expressed in circumvallate taste bud cells.

It localises to the cell membrane. The protein localises to the endoplasmic reticulum membrane. The protein resides in the basolateral cell membrane. The catalysed reaction is ATP(in) = ATP(out). The enzyme catalyses Ca(2+)(in) = Ca(2+)(out). It catalyses the reaction Mg(2+)(in) = Mg(2+)(out). It carries out the reaction Na(+)(in) = Na(+)(out). The catalysed reaction is K(+)(in) = K(+)(out). The enzyme catalyses Li(+)(in) = Li(+)(out). It catalyses the reaction Rb(+)(in) = Rb(+)(out). It carries out the reaction Cs(+)(in) = Cs(+)(out). The catalysed reaction is chloride(in) = chloride(out). Its activity is regulated as follows. Regulated by membrane voltage and extracellular Ca(2+). Inhibited by Gd(3+), ruthenium red, and Zn(2+) and partially inhibited by 2-aminoethoxydiphenyl borate. Its function is as follows. Pore-forming subunit of gustatory voltage-gated ion channels required for sensory perception of sweet, bitter and umami tastes. With CALHM3 forms a fast-activating voltage-gated ATP-release channel in type II taste bud cells, ATP acting as a neurotransmitter to activate afferent neural gustatory pathways. Acts both as a voltage-gated and calcium-activated ion channel: mediates neuronal excitability in response to membrane depolarization and low extracellular Ca(2+) concentration. Has poor ion selectivity and forms a wide pore (around 14 Angstroms) that mediates permeation of small ions including Ca(2+), Na(+), K(+) and Cl(-), as well as larger ions such as ATP(4-). Mediates Ca(2+) influx and downstream activation of the ERK1 and ERK2 cascade in neurons. Triggers endoplasmic reticulum stress by reducing the Ca(2+) content of the endoplasmic reticulum. May indirectly control amyloid precursor protein (APP) proteolysis and aggregated amyloid-beta (Abeta) peptides levels in a Ca(2+)-dependent manner. This chain is Calcium homeostasis modulator protein 1, found in Homo sapiens (Human).